Consider the following 238-residue polypeptide: Ribosomal RNA small subunit methyltransferase G (238 aa).

S-adenosyl-L-methionine-binding positions include G78, 129–130 (AE), and R148.

The protein belongs to the methyltransferase superfamily. RNA methyltransferase RsmG family.

It is found in the cytoplasm. In terms of biological role, specifically methylates the N7 position of a guanine in 16S rRNA. The protein is Ribosomal RNA small subunit methyltransferase G of Caldicellulosiruptor bescii (strain ATCC BAA-1888 / DSM 6725 / KCTC 15123 / Z-1320) (Anaerocellum thermophilum).